The sequence spans 288 residues: Scolexin B (288 aa).

Residues 1–20 (MFASKLAVCSALALLAVAHA) form the signal peptide. The region spanning 21 to 287 (APGGNDIQKI…VRDWIKKVTN (267 aa)) is the Peptidase S1 domain. The disordered stretch occupies residues 27–56 (IQKITKAPNVPTKAEGDAASKASAPAIPPK). Cysteines 72 and 88 form a disulfide. Residues His87 and Asp145 each act as charge relay system in the active site. Cystine bridges form between Cys210–Cys223 and Cys235–Cys264. Residue Ser239 is the Charge relay system of the active site.

The protein belongs to the peptidase S1 family.

This chain is Scolexin B, found in Heliothis virescens (Tobacco budworm moth).